We begin with the raw amino-acid sequence, 436 residues long: Enolase (436 aa).

Gln-167 is a (2R)-2-phosphoglycerate binding site. Glu-209 functions as the Proton donor in the catalytic mechanism. Asp-246, Glu-291, and Asp-318 together coordinate Mg(2+). Lys-343, Arg-372, Ser-373, and Lys-394 together coordinate (2R)-2-phosphoglycerate. The active-site Proton acceptor is Lys-343.

Belongs to the enolase family. In terms of assembly, component of the RNA degradosome, a multiprotein complex involved in RNA processing and mRNA degradation. Mg(2+) is required as a cofactor.

It is found in the cytoplasm. Its subcellular location is the secreted. The protein localises to the cell surface. It catalyses the reaction (2R)-2-phosphoglycerate = phosphoenolpyruvate + H2O. It functions in the pathway carbohydrate degradation; glycolysis; pyruvate from D-glyceraldehyde 3-phosphate: step 4/5. Functionally, catalyzes the reversible conversion of 2-phosphoglycerate (2-PG) into phosphoenolpyruvate (PEP). It is essential for the degradation of carbohydrates via glycolysis. This chain is Enolase, found in Haemophilus influenzae (strain PittEE).